Here is a 633-residue protein sequence, read N- to C-terminus: UvrABC system protein C (633 aa).

Residues 37–115 form the GIY-YIG domain; it reads PKPGVYRMFG…IKSLKPRFNI (79 aa). A UVR domain is found at 225 to 260; it reads NALREDLQTRMAQASEAMDFETAAKLRDRIRAIAAV.

Belongs to the UvrC family. Interacts with UvrB in an incision complex.

It localises to the cytoplasm. The UvrABC repair system catalyzes the recognition and processing of DNA lesions. UvrC both incises the 5' and 3' sides of the lesion. The N-terminal half is responsible for the 3' incision and the C-terminal half is responsible for the 5' incision. This chain is UvrABC system protein C, found in Maricaulis maris (strain MCS10) (Caulobacter maris).